We begin with the raw amino-acid sequence, 535 residues long: Serum response factor-binding protein 1 (535 aa).

Coiled coils occupy residues 5-27 (LNLN…LIIR) and 107-177 (LKQK…EKCK). Composition is skewed to basic and acidic residues over residues 128-151 (AAEG…ETKK), 159-191 (KNTE…EKAL), 205-325 (AENK…ERPV), 361-376 (DKEK…ERFY), 406-432 (SDKD…EVQK), and 460-472 (TKRE…ERNK). Disordered regions lie at residues 128 to 435 (AAEG…KEIP) and 453 to 535 (TKPK…VFDD).

The protein localises to the cytoplasm. Its subcellular location is the perinuclear region. Its function is as follows. May be involved in regulating transcriptional activation of cardiac genes during the aging process. May play a role in biosynthesis and/or processing of SLC2A4 in adipose cells. This is Serum response factor-binding protein 1 from Xenopus tropicalis (Western clawed frog).